We begin with the raw amino-acid sequence, 637 residues long: 1-deoxy-D-xylulose-5-phosphate synthase (637 aa).

Residues histidine 76 and 117–119 contribute to the thiamine diphosphate site; that span reads GHS. Mg(2+) is bound at residue aspartate 148. Thiamine diphosphate-binding positions include 149 to 150, asparagine 177, tyrosine 294, and glutamate 381; that span reads GA. Mg(2+) is bound at residue asparagine 177.

It belongs to the transketolase family. DXPS subfamily. As to quaternary structure, homodimer. Requires Mg(2+) as cofactor. Thiamine diphosphate is required as a cofactor.

It carries out the reaction D-glyceraldehyde 3-phosphate + pyruvate + H(+) = 1-deoxy-D-xylulose 5-phosphate + CO2. It participates in metabolic intermediate biosynthesis; 1-deoxy-D-xylulose 5-phosphate biosynthesis; 1-deoxy-D-xylulose 5-phosphate from D-glyceraldehyde 3-phosphate and pyruvate: step 1/1. Catalyzes the acyloin condensation reaction between C atoms 2 and 3 of pyruvate and glyceraldehyde 3-phosphate to yield 1-deoxy-D-xylulose-5-phosphate (DXP). The polypeptide is 1-deoxy-D-xylulose-5-phosphate synthase (Neisseria meningitidis serogroup C / serotype 2a (strain ATCC 700532 / DSM 15464 / FAM18)).